The chain runs to 582 residues: La-related protein 7 (582 aa).

M1 bears the N-acetylmethionine mark. The tract at residues 1 to 27 is disordered; that stretch reads METESGNQEKVMEEESTEKKKEVEKKK. Over residues 10–25 the composition is skewed to basic and acidic residues; that stretch reads KVMEEESTEKKKEVEK. The region spanning 28–122 is the HTH La-type RNA-binding domain; it reads RSRVKQVLAD…KPLGERPKDE (95 aa). The 79-residue stretch at 125–203 folds into the RRM domain; sequence RTVYVELLPK…PRKPGIFPKT (79 aa). Disordered stretches follow at residues 188 to 368 and 410 to 442; these read NPPE…ERHK and KSES…RTQE. Residues 219–228 show a composition bias toward basic residues; it reads KKKKKKKGRM. The span at 229–240 shows a compositional bias: basic and acidic residues; sequence KKEDNIQAKEEN. K237 is covalently cross-linked (Glycyl lysine isopeptide (Lys-Gly) (interchain with G-Cter in SUMO2)). Residue T257 is modified to Phosphothreonine. Phosphoserine occurs at positions 258, 261, 273, 298, 299, and 300. Residues 316–335 show a composition bias toward basic and acidic residues; that stretch reads IQKDIIKEASEASKENRDIE. Position 337 is a phosphoserine (S337). T338 is subject to Phosphothreonine. S351 is subject to Phosphoserine. Positions 354 to 367 are enriched in basic residues; that stretch reads KTKRKHKKKHKERH. A Glycyl lysine isopeptide (Lys-Gly) (interchain with G-Cter in SUMO2) cross-link involves residue K410. Residues 428–442 show a composition bias toward basic and acidic residues; sequence KNEKTANREECRTQE. The 114-residue stretch at 450-563 folds into the xRRM domain; the sequence is QFVSGVIVKI…TEKLITKAEK (114 aa).

This sequence belongs to the LARP7 family. In terms of assembly, core component of the 7SK RNP complex, at least composed of 7SK RNA, LARP7, MEPCE, HEXIM1 (or HEXIM2) and P-TEFb (composed of CDK9 and CCNT1/cyclin-T1). Interacts with METTL16. Interacts with RBM7; upon genotoxic stress this interaction is enhanced, triggering the release of inactive P-TEFb complex from the core, yielding to P-TEFb complex activation. Associates with box C/D small nucleolar ribonucleoprotein (snoRNP) complexes.

Its subcellular location is the nucleus. The protein localises to the nucleoplasm. Functionally, RNA-binding protein that specifically binds distinct small nuclear RNA (snRNAs) and regulates their processing and function. Specifically binds the 7SK snRNA (7SK RNA) and acts as a core component of the 7SK ribonucleoprotein (RNP) complex, thereby acting as a negative regulator of transcription elongation by RNA polymerase II. The 7SK RNP complex sequesters the positive transcription elongation factor b (P-TEFb) in a large inactive 7SK RNP complex preventing RNA polymerase II phosphorylation and subsequent transcriptional elongation. The 7SK RNP complex also promotes snRNA gene transcription by RNA polymerase II via interaction with the little elongation complex (LEC). LARP7 specifically binds to the highly conserved 3'-terminal U-rich stretch of 7SK RNA; on stimulation, remains associated with 7SK RNA, whereas P-TEFb is released from the complex. LARP7 also acts as a regulator of mRNA splicing fidelity by promoting U6 snRNA processing. Specifically binds U6 snRNAs and associates with a subset of box C/D RNP complexes: promotes U6 snRNA 2'-O-methylation by facilitating U6 snRNA loading into box C/D RNP complexes. U6 snRNA 2'-O-methylation is required for mRNA splicing fidelity. Binds U6 snRNAs with a 5'-CAGGG-3' sequence motif. U6 snRNA processing is required for spermatogenesis. This Homo sapiens (Human) protein is La-related protein 7.